The following is a 24-amino-acid chain: Grammistin Gs G (24 aa).

The protein belongs to the grammistin family. Group 1 subfamily. As to quaternary structure, exists as aggregates of 3-4 molecules. As to expression, expressed by the skin glands.

The protein resides in the secreted. Thanks to its abundant amphiphilic alpha-helices, it may integrate into membrane phospholipids, leading to lysis of the membrane. Its high hemolytic activity is inhibited by phospholipids, but not by cholesterol. Has antibacterial activity with a broad spectrum against various species of bacteria including both Gram-positive and Gram-negative groups. Also has high ichthyotoxic activity. This is Grammistin Gs G from Grammistes sexlineatus (Goldenstriped soapfish).